A 315-amino-acid polypeptide reads, in one-letter code: Homeobox-leucine zipper protein HAT3 (315 aa).

The interval 140–163 (SCSLGGGSDDEDGSGNGDDSSRKK) is disordered. Positions 159–218 (SSRKKLRLSKEQALVLEETFKEHSTLNPKQKMALAKQLNLRTRQVEVWFQNRRARTKLKQ) form a DNA-binding region, homeobox. The tract at residues 226–247 (LKRCCENLTDENRRLQKEVSEL) is leucine-zipper. The segment covering 280-305 (SSSSVAPPVMNSSSPMGPMSPWAAMP) has biased composition (low complexity). A disordered region spans residues 280–315 (SSSSVAPPVMNSSSPMGPMSPWAAMPLRQRPAAGSH).

Belongs to the HD-ZIP homeobox family. Class II subfamily.

The protein resides in the nucleus. Its function is as follows. Probable transcription factor. The protein is Homeobox-leucine zipper protein HAT3 (HAT3) of Arabidopsis thaliana (Mouse-ear cress).